Consider the following 199-residue polypeptide: Guanylate kinase (199 aa).

The Guanylate kinase-like domain maps to 20-198 (GKLIILTGPS…ALQAIEVALF (179 aa)). Residue 27–34 (GPSGVGKG) coordinates ATP.

This sequence belongs to the guanylate kinase family.

The protein resides in the cytoplasm. The catalysed reaction is GMP + ATP = GDP + ADP. Essential for recycling GMP and indirectly, cGMP. The protein is Guanylate kinase of Nostoc sp. (strain PCC 7120 / SAG 25.82 / UTEX 2576).